Here is an 89-residue protein sequence, read N- to C-terminus: Barrier-to-autointegration factor 1 (89 aa).

This sequence belongs to the BAF family. As to quaternary structure, interacts with emr-1 and lem-2. Interacts with lem-4l, leading to decreased phosphorylation by VRK1 and promoting dephosphorylation by protein phosphatase 2A (PP2A). Post-translationally, phosphorylated by vrk-1. Phosphorylation by vrk-1 in mitosis is essential to achieve correct timing of recruitment of nuclear envelope components during nuclear envelope assembly. Dephosphorylated by protein phosphatase 2A (PP2A) following interaction with lem-4l during mitotic exit, leading to mitotic nuclear envelope reassembly.

The protein localises to the nucleus. In terms of biological role, DNA-binding protein which plays an essential role in nuclear envelope formation. Required for normal chromosome segregation during mitosis. Associates with the nuclear lamina via its interaction with LEM domain containing proteins emr-1 and lem-2. In association with lem-3, plays a role in radiation-induced DNA damage repair response. This chain is Barrier-to-autointegration factor 1 (baf-1), found in Caenorhabditis elegans.